Reading from the N-terminus, the 128-residue chain is Keratin-associated protein 21-1 (128 aa).

Residues 11–117 form a 51 X 2 AA repeats of G-[YCGS] region; it reads GGCGYGSRYG…RYGCGYGSGC (107 aa).

It belongs to the KRTAP type 21 family. Interacts with hair keratins. As to expression, strong expression in narrowly defined pattern restricted to the lower and middle cortical regions of the hair shaft in both developing and cycling hair. During hair follicle regression (catagen), expression levels decrease until expression is no longer detectable in follicles at resting stage (telogen).

Functionally, in the hair cortex, hair keratin intermediate filaments are embedded in an interfilamentous matrix, consisting of hair keratin-associated proteins (KRTAP), which are essential for the formation of a rigid and resistant hair shaft through their extensive disulfide bond cross-linking with abundant cysteine residues of hair keratins. The matrix proteins include the high-sulfur and high-glycine-tyrosine keratins. The protein is Keratin-associated protein 21-1 (Krtap21-1) of Mus musculus (Mouse).